Consider the following 374-residue polypeptide: Ferroptosis suppressor protein 1 (374 aa).

Gly2 is lipidated: N-myristoyl glycine. A helical membrane pass occupies residues 13-35 (VVIVGGGFAGIAAASQLKSFGIP). 6-hydroxy-FAD contacts are provided by residues 17–21 (GGGFA), Arg53, and Val81. Lys167 carries the post-translational modification N6-acetyllysine. Asp285 contributes to the 6-hydroxy-FAD binding site.

This sequence belongs to the FAD-dependent oxidoreductase family. 6-hydroxy-FAD serves as cofactor. Post-translationally, N-myristoylation at Gly-2 mediates the recruitment to lipid droplets and plasma membrane. In terms of processing, acetylation at Lys-167 prevents AIFM2 ubiquitination and degradation, thereby inhibiting ferroptosis. KAT2B mediates acetylation at Lys-167, while HDAC3 removes it. Ubiquitinated. AIFM2 undergoes 'Lys-29'-ubiquitination and proteasomal degradation, which is inhibited by acetylation at Lys-167.

It is found in the lipid droplet. It localises to the cell membrane. The protein localises to the cytoplasm. The protein resides in the mitochondrion membrane. Its subcellular location is the nucleus. The enzyme catalyses ubiquinone-10 + NADH + H(+) = ubiquinol-10 + NAD(+). It carries out the reaction phylloquinone + NADH + H(+) = phylloquinol + NAD(+). The catalysed reaction is menaquinone-4 + NADH + H(+) = menaquinol-4 + NAD(+). It catalyses the reaction menadione + NADH + H(+) = menadiol + NAD(+). Its activity is regulated as follows. The modification by 4-hydroxy-2-nonenal (HNE) adduction in mitochondria results in loss of the oxidoreductase activity and activation of a novel function in mitochondrial oxidative stress signaling. Functionally, a NAD(P)H-dependent oxidoreductase that acts as a key inhibitor of ferroptosis. At the plasma membrane, catalyzes reduction of coenzyme Q/ubiquinone-10 to ubiquinol-10, a lipophilic radical-trapping antioxidant that prevents lipid oxidative damage and consequently ferroptosis. Acts in parallel to GPX4 to suppress phospholipid peroxidation and ferroptosis. This anti-ferroptotic function is independent of cellular glutathione levels. Also acts as a potent radical-trapping antioxidant by mediating warfarin-resistant vitamin K reduction in the canonical vitamin K cycle: catalyzes NAD(P)H-dependent reduction of vitamin K (phylloquinone, menaquinone-4 and menadione) to hydroquinone forms. Hydroquinones act as potent radical-trapping antioxidants inhibitor of phospholipid peroxidation and ferroptosis. May play a role in mitochondrial stress signaling. Upon oxidative stress, associates with the lipid peroxidation end product 4-hydroxy-2-nonenal (HNE) forming a lipid adduct devoid of oxidoreductase activity, which then translocates from mitochondria into the nucleus triggering DNA damage and cell death. The polypeptide is Ferroptosis suppressor protein 1 (aifm2) (Xenopus laevis (African clawed frog)).